We begin with the raw amino-acid sequence, 826 residues long: Disintegrin and metalloproteinase domain-containing protein 8 (826 aa).

Residues 1–16 (MLGLWLLSVLWTPAVA) form the signal peptide. The Extracellular portion of the chain corresponds to 17 to 658 (PGPPLPHVKQ…VSDEQAASTS (642 aa)). N89 and N260 each carry an N-linked (GlcNAc...) asparagine glycan. A Peptidase M12B domain is found at 196–395 (RYVELYVVAD…PQTGCLTNVP (200 aa)). 12 cysteine pairs are disulfide-bonded: C305–C390, C346–C374, C348–C357, C430–C452, C443–C449, C461–C481, C468–C498, C493–C503, C563–C615, C615–C625, C619–C631, and C633–C642. H329 is a binding site for Zn(2+). The active site involves E330. H333 and H339 together coordinate Zn(2+). Positions 403-489 (GPVCGNLFVE…TCPEDAFQQN (87 aa)) constitute a Disintegrin domain. N-linked (GlcNAc...) asparagine glycosylation is present at N431. Positions 611–643 (RSENCSAKCNNHGVCNHKRECHCHKGWAPPNCV) constitute an EGF-like domain. An N-linked (GlcNAc...) asparagine glycan is attached at N614. A helical transmembrane segment spans residues 659–683 (LPVSVVVVLVILVAAMVIVAGIVIY). At 684-826 (RKAPRQIQRR…VALKVPIQKR (143 aa)) the chain is on the cytoplasmic side. The disordered stretch occupies residues 701-826 (SGLSNPLFYT…VALKVPIQKR (126 aa)). The segment covering 733 to 748 (PPRPIVKPKRPPPAPP) has biased composition (pro residues). Low complexity predominate over residues 749–763 (GAVSSSPLPVPVYAP).

As to quaternary structure, interacts with FST3. The cofactor is Zn(2+). As to expression, macrophages.

It is found in the membrane. Its function is as follows. Possible involvement in extravasation of leukocytes. This chain is Disintegrin and metalloproteinase domain-containing protein 8 (Adam8), found in Mus musculus (Mouse).